A 251-amino-acid chain; its full sequence is MPRYVPLLLLLLLLRCSERGGGVNFGEKDAKVPGTWRDGVRVPGEGASWDSDRASPERRYGIVGLSQSISTKHPETSPKDSRIRENDVTADGRTTEDHITADPGTTEDSVTADPGTTEDNVTVDPGTTEGSVTADPATTKDYVSADPGTTKDSVTADPGTTENFVTADPGTTKDSITADPRTTEDSVTADPGTTKHSITVDPGTTEDSVTADPGTTKHSITADPGTTEDSVTADPGTTEDETTKHGDTHLL.

The first 22 residues, 1 to 22 (MPRYVPLLLLLLLLRCSERGGG), serve as a signal peptide directing secretion. Disordered stretches follow at residues 36–55 (WRDG…DRAS) and 65–251 (LSQS…THLL). The segment covering 72–87 (KHPETSPKDSRIREND) has biased composition (basic and acidic residues). N-linked (GlcNAc...) asparagine glycosylation occurs at Asn120. Over residues 150–164 (TKDSVTADPGTTENF) the composition is skewed to polar residues. The segment at 153-251 (SVTADPGTTE…TTKHGDTHLL (99 aa)) is 15 X 11 AA approximate repeats. The segment covering 241 to 251 (ETTKHGDTHLL) has biased composition (basic and acidic residues).

In terms of tissue distribution, detected in the brain, lung, spleen, thymus and prostate.

The protein localises to the secreted. This chain is Protein PBMUCL2 (HCG22), found in Homo sapiens (Human).